A 583-amino-acid polypeptide reads, in one-letter code: Probable cysteine--tRNA ligase, mitochondrial (583 aa).

C82 is a Zn(2+) binding site. Residue G83 coordinates L-cysteine. The short motif at 84 to 94 (PTVYSSSHIGH) is the 'HIGH' region element. T123 contacts L-cysteine. Positions 128–131 (KIIN) match the 'KIIK' region motif. Positions 271, 296, and 300 each coordinate Zn(2+). H296 serves as a coordination point for L-cysteine. The short motif at 337–341 (KMSKS) is the 'KMSKS' region element. Residue K340 coordinates ATP.

This sequence belongs to the class-I aminoacyl-tRNA synthetase family. Requires Zn(2+) as cofactor.

Its subcellular location is the mitochondrion. The enzyme catalyses tRNA(Cys) + L-cysteine + ATP = L-cysteinyl-tRNA(Cys) + AMP + diphosphate. Mitochondrial cysteine-specific aminoacyl-tRNA synthetase that catalyzes the ATP-dependent ligation of cysteine to tRNA(Cys). In terms of biological role, in addition to its role as an aminoacyl-tRNA synthetase, has also cysteine persulfide synthase activity. Produces reactive persulfide species such as cysteine persulfide (CysSSH) from substrate cysteine and mediate direct incorporation of CysSSH into proteins during translations, resulting in protein persulfides and polysulfides. CysSSHs behave as potent antioxidants and cellular protectants. This is Probable cysteine--tRNA ligase, mitochondrial (mcysS) from Dictyostelium discoideum (Social amoeba).